The following is an 86-amino-acid chain: Cell division protein ZapA (86 aa).

Belongs to the ZapA family. Type 2 subfamily. As to quaternary structure, homodimer. Interacts with FtsZ.

Its subcellular location is the cytoplasm. Activator of cell division through the inhibition of FtsZ GTPase activity, therefore promoting FtsZ assembly into bundles of protofilaments necessary for the formation of the division Z ring. It is recruited early at mid-cell but it is not essential for cell division. The protein is Cell division protein ZapA of Oceanobacillus iheyensis (strain DSM 14371 / CIP 107618 / JCM 11309 / KCTC 3954 / HTE831).